Here is a 251-residue protein sequence, read N- to C-terminus: PF03932 family protein CutC (251 aa).

The protein belongs to the CutC family.

It localises to the cytoplasm. The sequence is that of PF03932 family protein CutC from Bacteroides fragilis (strain YCH46).